Here is a 252-residue protein sequence, read N- to C-terminus: Imidazole glycerol phosphate synthase subunit HisF (252 aa).

Active-site residues include D11 and D130.

The protein belongs to the HisA/HisF family. Heterodimer of HisH and HisF.

The protein localises to the cytoplasm. It catalyses the reaction 5-[(5-phospho-1-deoxy-D-ribulos-1-ylimino)methylamino]-1-(5-phospho-beta-D-ribosyl)imidazole-4-carboxamide + L-glutamine = D-erythro-1-(imidazol-4-yl)glycerol 3-phosphate + 5-amino-1-(5-phospho-beta-D-ribosyl)imidazole-4-carboxamide + L-glutamate + H(+). It functions in the pathway amino-acid biosynthesis; L-histidine biosynthesis; L-histidine from 5-phospho-alpha-D-ribose 1-diphosphate: step 5/9. Functionally, IGPS catalyzes the conversion of PRFAR and glutamine to IGP, AICAR and glutamate. The HisF subunit catalyzes the cyclization activity that produces IGP and AICAR from PRFAR using the ammonia provided by the HisH subunit. This Syntrophomonas wolfei subsp. wolfei (strain DSM 2245B / Goettingen) protein is Imidazole glycerol phosphate synthase subunit HisF.